The following is a 334-amino-acid chain: L-lactate dehydrogenase B chain (334 aa).

A2 is modified (N-acetylalanine). K7 is subject to N6-acetyllysine. S44 carries the phosphoserine modification. NAD(+) contacts are provided by residues 53–58 (DVLEDK) and R100. An N6-acetyllysine modification is found at K58. R107 contacts substrate. K119 is modified (N6-acetyllysine). N139 is a binding site for NAD(+). Substrate contacts are provided by N139 and R170. H194 (proton acceptor) is an active-site residue. Y240 is modified (phosphotyrosine). Residue T249 participates in substrate binding. At K329 the chain carries N6-acetyllysine.

It belongs to the LDH/MDH superfamily. LDH family. As to quaternary structure, homotetramer. Interacts with PTEN upstream reading frame protein MP31; the interaction leads to inhibition of mitochondrial lactate dehydrogenase activity, preventing conversion of lactate to pyruvate in mitochondria.

It is found in the cytoplasm. The protein resides in the mitochondrion inner membrane. It carries out the reaction (S)-lactate + NAD(+) = pyruvate + NADH + H(+). Its pathway is fermentation; pyruvate fermentation to lactate; (S)-lactate from pyruvate: step 1/1. Functionally, interconverts simultaneously and stereospecifically pyruvate and lactate with concomitant interconversion of NADH and NAD(+). This is L-lactate dehydrogenase B chain (LDHB) from Bos taurus (Bovine).